The sequence spans 108 residues: CRISPR-associated endoribonuclease Cas2 (108 aa).

Mg(2+) is bound at residue Asp-15.

This sequence belongs to the CRISPR-associated endoribonuclease Cas2 protein family. In terms of assembly, homodimer, forms a heterotetramer with a Cas1 homodimer. It depends on Mg(2+) as a cofactor.

Its function is as follows. CRISPR (clustered regularly interspaced short palindromic repeat), is an adaptive immune system that provides protection against mobile genetic elements (viruses, transposable elements and conjugative plasmids). CRISPR clusters contain sequences complementary to antecedent mobile elements and target invading nucleic acids. CRISPR clusters are transcribed and processed into CRISPR RNA (crRNA). Functions as a ssRNA-specific endoribonuclease. Involved in the integration of spacer DNA into the CRISPR cassette. This chain is CRISPR-associated endoribonuclease Cas2, found in Paracidovorax avenae (strain ATCC 19860 / DSM 7227 / CCUG 15838 / JCM 20985 / LMG 2117 / NCPPB 1011) (Acidovorax avenae).